Consider the following 269-residue polypeptide: Ribosomal RNA small subunit methyltransferase J (269 aa).

S-adenosyl-L-methionine is bound by residues 125–126 (ER) and D179.

This sequence belongs to the methyltransferase superfamily. RsmJ family.

It is found in the cytoplasm. It carries out the reaction guanosine(1516) in 16S rRNA + S-adenosyl-L-methionine = N(2)-methylguanosine(1516) in 16S rRNA + S-adenosyl-L-homocysteine + H(+). Specifically methylates the guanosine in position 1516 of 16S rRNA. In Pseudomonas savastanoi pv. phaseolicola (strain 1448A / Race 6) (Pseudomonas syringae pv. phaseolicola (strain 1448A / Race 6)), this protein is Ribosomal RNA small subunit methyltransferase J.